Here is a 237-residue protein sequence, read N- to C-terminus: Probable transcriptional regulatory protein Mfl546 (237 aa).

The tract at residues 1–20 (MGRAHEVRAASMAKTAAKKS) is disordered. The span at 9–20 (AASMAKTAAKKS) shows a compositional bias: low complexity.

The protein belongs to the TACO1 family.

It localises to the cytoplasm. The chain is Probable transcriptional regulatory protein Mfl546 from Mesoplasma florum (strain ATCC 33453 / NBRC 100688 / NCTC 11704 / L1) (Acholeplasma florum).